The sequence spans 84 residues: uncharacterized protein (84 aa).

Positions 34–54 (ATSTASSSAAKNTTSSSKNAA) are enriched in low complexity. The interval 34 to 57 (ATSTASSSAAKNTTSSSKNAAPGM) is disordered. Asn-45 carries an N-linked (GlcNAc...) asparagine glycan. The chain crosses the membrane as a helical span at residues 66–83 (YGIIMAAFAAVSFVLGTG).

The protein localises to the endoplasmic reticulum membrane. This is an uncharacterized protein from Saccharomyces cerevisiae (strain ATCC 204508 / S288c) (Baker's yeast).